Reading from the N-terminus, the 146-residue chain is Hemoglobin subunit beta-2 (146 aa).

Residues 2–146 (EWTDFERATI…VVSSLGRQYH (145 aa)) form the Globin domain. 2 residues coordinate heme b: histidine 63 and histidine 92.

Belongs to the globin family. As to quaternary structure, hb 2 is a heterotetramer of two alpha-2 and two beta-2 chains. As to expression, red blood cells.

Its function is as follows. Involved in oxygen transport from gills to the various peripheral tissues. The chain is Hemoglobin subunit beta-2 (hbb2) from Gobionotothen gibberifrons (Humped rockcod).